Consider the following 237-residue polypeptide: Phosphoribosylaminoimidazole-succinocarboxamide synthase (237 aa).

It belongs to the SAICAR synthetase family.

It carries out the reaction 5-amino-1-(5-phospho-D-ribosyl)imidazole-4-carboxylate + L-aspartate + ATP = (2S)-2-[5-amino-1-(5-phospho-beta-D-ribosyl)imidazole-4-carboxamido]succinate + ADP + phosphate + 2 H(+). The protein operates within purine metabolism; IMP biosynthesis via de novo pathway; 5-amino-1-(5-phospho-D-ribosyl)imidazole-4-carboxamide from 5-amino-1-(5-phospho-D-ribosyl)imidazole-4-carboxylate: step 1/2. This Alteromonas mediterranea (strain DSM 17117 / CIP 110805 / LMG 28347 / Deep ecotype) protein is Phosphoribosylaminoimidazole-succinocarboxamide synthase.